A 624-amino-acid chain; its full sequence is Glutamine--fructose-6-phosphate aminotransferase [isomerizing] (624 aa).

Residue Cys-2 is the Nucleophile; for GATase activity of the active site. A Glutamine amidotransferase type-2 domain is found at 2–225 (CGIVGYVGRR…QDQAVVITAD (224 aa)). 2 consecutive SIS domains span residues 297-436 (SDQE…ARGT) and 469-614 (LAHR…VDKP). Lys-619 serves as the catalytic For Fru-6P isomerization activity.

Homodimer.

The protein resides in the cytoplasm. It carries out the reaction D-fructose 6-phosphate + L-glutamine = D-glucosamine 6-phosphate + L-glutamate. In terms of biological role, catalyzes the first step in hexosamine metabolism, converting fructose-6P into glucosamine-6P using glutamine as a nitrogen source. This is Glutamine--fructose-6-phosphate aminotransferase [isomerizing] from Mycobacterium bovis (strain ATCC BAA-935 / AF2122/97).